A 168-amino-acid polypeptide reads, in one-letter code: Large ribosomal subunit protein uL10 (168 aa).

Belongs to the universal ribosomal protein uL10 family. Part of the ribosomal stalk of the 50S ribosomal subunit. The N-terminus interacts with L11 and the large rRNA to form the base of the stalk. The C-terminus forms an elongated spine to which L12 dimers bind in a sequential fashion forming a multimeric L10(L12)X complex.

Its function is as follows. Forms part of the ribosomal stalk, playing a central role in the interaction of the ribosome with GTP-bound translation factors. The polypeptide is Large ribosomal subunit protein uL10 (Ralstonia nicotianae (strain ATCC BAA-1114 / GMI1000) (Ralstonia solanacearum)).